A 305-amino-acid polypeptide reads, in one-letter code: Sulfate adenylyltransferase subunit 2 1 (305 aa).

The tract at residues 283-305 (RSGRAIDHDQAGSMERKKREGYF) is disordered.

It belongs to the PAPS reductase family. CysD subfamily. As to quaternary structure, heterodimer composed of CysD, the smaller subunit, and CysN.

It catalyses the reaction sulfate + ATP + H(+) = adenosine 5'-phosphosulfate + diphosphate. It functions in the pathway sulfur metabolism; hydrogen sulfide biosynthesis; sulfite from sulfate: step 1/3. With CysN forms the ATP sulfurylase (ATPS) that catalyzes the adenylation of sulfate producing adenosine 5'-phosphosulfate (APS) and diphosphate, the first enzymatic step in sulfur assimilation pathway. APS synthesis involves the formation of a high-energy phosphoric-sulfuric acid anhydride bond driven by GTP hydrolysis by CysN coupled to ATP hydrolysis by CysD. The polypeptide is Sulfate adenylyltransferase subunit 2 1 (Chromohalobacter salexigens (strain ATCC BAA-138 / DSM 3043 / CIP 106854 / NCIMB 13768 / 1H11)).